The chain runs to 434 residues: Ribosomal protein uS12 methylthiotransferase RimO (434 aa).

Positions S6 to K122 constitute an MTTase N-terminal domain. 6 residues coordinate [4Fe-4S] cluster: C15, C51, C85, C146, C150, and C153. Positions L132 to A361 constitute a Radical SAM core domain. One can recognise a TRAM domain in the interval Q364–L434.

It belongs to the methylthiotransferase family. RimO subfamily. The cofactor is [4Fe-4S] cluster.

Its subcellular location is the cytoplasm. The enzyme catalyses L-aspartate(89)-[ribosomal protein uS12]-hydrogen + (sulfur carrier)-SH + AH2 + 2 S-adenosyl-L-methionine = 3-methylsulfanyl-L-aspartate(89)-[ribosomal protein uS12]-hydrogen + (sulfur carrier)-H + 5'-deoxyadenosine + L-methionine + A + S-adenosyl-L-homocysteine + 2 H(+). Functionally, catalyzes the methylthiolation of an aspartic acid residue of ribosomal protein uS12. The polypeptide is Ribosomal protein uS12 methylthiotransferase RimO (Chloroherpeton thalassium (strain ATCC 35110 / GB-78)).